The sequence spans 146 residues: Probable gamma-secretase subunit PEN-2 (146 aa).

Residues 1–26 (MEATRSDDPSLNPIRNRNPNPNPNPN) form a disordered region. Residues 1-61 (MEATRSDDPS…SVDYARRFYK (61 aa)) are Lumenal-facing. Residues 9 to 19 (PSLNPIRNRNP) show a composition bias toward low complexity. The helical transmembrane segment at 62 to 82 (FGFALLPWLWFVNCFYFWPVL) threads the bilayer. The Cytoplasmic portion of the chain corresponds to 83–98 (RHSRAFPQIRNYVVRS). Residues 99-119 (AIGFSVFTALLSAWALTFSIG) traverse the membrane as a helical segment. The Lumenal portion of the chain corresponds to 120–146 (GEQLFGPLYDKLVMYNVADRLGLSGLA).

The protein belongs to the PEN-2 family. Probable component of the gamma-secretase complex, a complex composed of a presenilin homodimer, nicastrin, APH1 and PEN2.

The protein resides in the membrane. Functionally, probable subunit of the gamma-secretase complex, an endoprotease complex that catalyzes the intramembrane cleavage of integral membrane proteins such as Notch receptors. The sequence is that of Probable gamma-secretase subunit PEN-2 from Arabidopsis thaliana (Mouse-ear cress).